Consider the following 930-residue polypeptide: Protein translocase subunit SecA (930 aa).

Residues Q87, 105–109 (GEGKT), and D515 contribute to the ATP site. 4 residues coordinate Zn(2+): C914, C916, C925, and H926.

The protein belongs to the SecA family. As to quaternary structure, monomer and homodimer. Part of the essential Sec protein translocation apparatus which comprises SecA, SecYEG and auxiliary proteins SecDF-YajC and YidC. It depends on Zn(2+) as a cofactor.

The protein resides in the cell inner membrane. It is found in the cytoplasm. The catalysed reaction is ATP + H2O + cellular proteinSide 1 = ADP + phosphate + cellular proteinSide 2.. In terms of biological role, part of the Sec protein translocase complex. Interacts with the SecYEG preprotein conducting channel. Has a central role in coupling the hydrolysis of ATP to the transfer of proteins into and across the cell membrane, serving both as a receptor for the preprotein-SecB complex and as an ATP-driven molecular motor driving the stepwise translocation of polypeptide chains across the membrane. This is Protein translocase subunit SecA from Burkholderia vietnamiensis (strain G4 / LMG 22486) (Burkholderia cepacia (strain R1808)).